The chain runs to 338 residues: Purple acid phosphatase 17 (338 aa).

Positions 1-31 (MNSGRRSLMSATASLSLLLCIFTTFVVVSNG) are cleaved as a signal peptide. Aspartate 53 provides a ligand contact to Fe cation. Asparagine 61 is a glycosylation site (N-linked (GlcNAc...) asparagine). Residues aspartate 86 and tyrosine 89 each contribute to the Fe cation site. Zn(2+) is bound at residue aspartate 86. Residues asparagine 124 and histidine 218 each contribute to the Zn(2+) site. Residue histidine 227 is the Proton donor of the active site. Histidine 253 lines the Zn(2+) pocket. 253–255 (HDH) contributes to the substrate binding site. Histidine 255 provides a ligand contact to Fe cation.

This sequence belongs to the metallophosphoesterase superfamily. Purple acid phosphatase family. As to quaternary structure, homodimer. Requires Fe cation as cofactor. Zn(2+) serves as cofactor. As to expression, expressed in roots, stems, leaves, flowers and siliques.

Its subcellular location is the secreted. The catalysed reaction is a phosphate monoester + H2O = an alcohol + phosphate. It carries out the reaction 2 a phenolic donor + H2O2 = 2 a phenolic radical donor + 2 H2O. Inhibited by phosphate and molybdate. Its function is as follows. Metallo-phosphoesterase involved in phosphate metabolism. Has a peroxidase activity. This Arabidopsis thaliana (Mouse-ear cress) protein is Purple acid phosphatase 17 (PAP17).